We begin with the raw amino-acid sequence, 346 residues long: UDP-3-O-acylglucosamine N-acyltransferase (346 aa).

Residue histidine 240 is the Proton acceptor of the active site.

This sequence belongs to the transferase hexapeptide repeat family. LpxD subfamily. In terms of assembly, homotrimer.

The catalysed reaction is a UDP-3-O-[(3R)-3-hydroxyacyl]-alpha-D-glucosamine + a (3R)-hydroxyacyl-[ACP] = a UDP-2-N,3-O-bis[(3R)-3-hydroxyacyl]-alpha-D-glucosamine + holo-[ACP] + H(+). The protein operates within bacterial outer membrane biogenesis; LPS lipid A biosynthesis. In terms of biological role, catalyzes the N-acylation of UDP-3-O-acylglucosamine using 3-hydroxyacyl-ACP as the acyl donor. Is involved in the biosynthesis of lipid A, a phosphorylated glycolipid that anchors the lipopolysaccharide to the outer membrane of the cell. In Bacteroides fragilis (strain YCH46), this protein is UDP-3-O-acylglucosamine N-acyltransferase.